Reading from the N-terminus, the 352-residue chain is C-C chemokine receptor type 5 (352 aa).

At methionine 1 to alanine 30 the chain is on the extracellular side. Position 3 is a sulfotyrosine (tyrosine 3). Serine 6 and serine 7 each carry an O-linked (GalNAc...) serine glycan. A sulfotyrosine mark is found at tyrosine 10, tyrosine 14, and tyrosine 15. Disulfide bonds link cysteine 20-cysteine 269 and cysteine 101-cysteine 178. The helical transmembrane segment at arginine 31–cysteine 58 threads the bilayer. Over lysine 59–tyrosine 68 the chain is Cytoplasmic. Residues leucine 69–tyrosine 89 form a helical membrane-spanning segment. The Extracellular portion of the chain corresponds to alanine 90–glutamine 102. Residues leucine 103–isoleucine 124 form a helical membrane-spanning segment. Residues aspartate 125–threonine 141 are Cytoplasmic-facing. A helical transmembrane segment spans residues valine 142 to phenylalanine 166. The Extracellular portion of the chain corresponds to threonine 167–isoleucine 198. The chain crosses the membrane as a helical span at residues valine 199–leucine 218. At lysine 219–arginine 235 the chain is on the cytoplasmic side. Residues leucine 236 to phenylalanine 260 form a helical membrane-spanning segment. The Extracellular portion of the chain corresponds to glutamine 261 to glutamine 277. The chain crosses the membrane as a helical span at residues alanine 278–glycine 301. The Cytoplasmic portion of the chain corresponds to glutamate 302 to leucine 352. 3 S-palmitoyl cysteine lipidation sites follow: cysteine 321, cysteine 323, and cysteine 324. Phosphoserine; by BARK1 is present on residues serine 336, serine 337, serine 342, and serine 349.

Belongs to the G-protein coupled receptor 1 family. In terms of assembly, interacts with PRAF2. Efficient ligand binding to CCL3/MIP-1alpha and CCL4/MIP-1beta requires sulfation, O-glycosylation and sialic acid modifications. Glycosylation on Ser-6 is required for efficient binding of CCL4. Interacts with GRK2. Interacts with ARRB1 and ARRB2. Interacts with CNIH4. Interacts with S100A4; this interaction stimulates T-lymphocyte chemotaxis. Post-translationally, sulfated on at least 2 of the N-terminal tyrosines. Sulfation is required for efficient binding of the chemokines, CCL3 and CCL4. In terms of processing, palmitoylation in the C-terminal is important for cell surface expression. Phosphorylation on serine residues in the C-terminal is stimulated by binding CC chemokines especially by APO-RANTES. Post-translationally, O-glycosylated, but not N-glycosylated. Ser-6 appears to be the major site even if Ser-7 may be also O-glycosylated. Also sialylated glycans present which contribute to chemokine binding. Thr-16 and Ser-17 may also be glycosylated and, if so, with small moieties such as a T-antigen.

Its subcellular location is the cell membrane. Functionally, receptor for a number of inflammatory CC-chemokines including CCL3/MIP-1-alpha, CCL4/MIP-1-beta and RANTES and subsequently transduces a signal by increasing the intracellular calcium ion level. May play a role in the control of granulocytic lineage proliferation or differentiation. Participates in T-lymphocyte migration to the infection site by acting as a chemotactic receptor. The sequence is that of C-C chemokine receptor type 5 (CCR5) from Erythrocebus patas (Red guenon).